A 93-amino-acid chain; its full sequence is Stromal cell-derived factor 1 (93 aa).

Positions 1–21 are cleaved as a signal peptide; it reads MNAKVVVVLVLVLTALCLSDG. A Receptor activation motif motif is present at residues 22–23; sequence KP. Residues 29-33 form a receptor and heparin binding region; sequence RCPCR. 2 disulfide bridges follow: Cys-30/Cys-55 and Cys-32/Cys-71. Receptor binding regions lie at residues 39–41, 48–50, and 60–70; these read VAR, KIL, and VARLKNNNRQV. Heparin contacts are provided by residues 41–51, Arg-62, Gln-69, and Lys-85; that span reads RANVKHLKILN.

It belongs to the intercrine alpha (chemokine CxC) family. As to quaternary structure, monomer or homodimer; in equilibrium. Dimer formation is induced by non acidic pH and the presence of multivalent anions, and by binding to CXCR4 or heparin. Monomeric form is required for full chemotactic activity and resistance to ischemia/reperfusion injury, whereas the dimeric form acts as a partial agonist of CXCR4, stimulating Ca2+ mobilization but with no chemotactic activity and instead acts as a selective antagonist that blocks chemotaxis induced by the monomeric form. Interacts with the N-terminus of ACKR3. Interacts with integrin subunit ITGB3 (via the allosteric site (site 2)). Interacts with TNFAIP6 (via Link domain). In terms of assembly, (Microbial infection) Interacts with molluscum contagiosum virus protein MC148. In terms of processing, processed forms SDF-1-beta(3-72) and SDF-1-alpha(3-67) are produced after secretion by proteolytic cleavage of isoforms Beta and Alpha, respectively. The N-terminal processing is probably achieved by DPP4. Isoform Alpha is first cleaved at the C-terminus to yield a SDF-1-alpha(1-67) intermediate before being processed at the N-terminus. The C-terminal processing of isoform Alpha is reduced by binding to heparin and, probably, cell surface proteoglycans. As to expression, isoform Alpha and isoform Beta are ubiquitously expressed, with highest levels detected in liver, pancreas and spleen. Isoform Gamma is mainly expressed in heart, with weak expression detected in several other tissues. Isoform Delta, isoform Epsilon and isoform Theta have highest expression levels in pancreas, with lower levels detected in heart, kidney, liver and spleen.

It localises to the secreted. In terms of biological role, chemoattractant active on T-lymphocytes and monocytes but not neutrophils. Activates the C-X-C chemokine receptor CXCR4 to induce a rapid and transient rise in the level of intracellular calcium ions and chemotaxis. SDF-1-beta(3-72) and SDF-1-alpha(3-67) show a reduced chemotactic activity. Binding to cell surface proteoglycans seems to inhibit formation of SDF-1-alpha(3-67) and thus to preserve activity on local sites. Also binds to atypical chemokine receptor ACKR3, which activates the beta-arrestin pathway and acts as a scavenger receptor for SDF-1. Binds to the allosteric site (site 2) of integrins and activates integrins ITGAV:ITGB3, ITGA4:ITGB1 and ITGA5:ITGB1 in a CXCR4-independent manner. Acts as a positive regulator of monocyte migration and a negative regulator of monocyte adhesion via the LYN kinase. Stimulates migration of monocytes and T-lymphocytes through its receptors, CXCR4 and ACKR3, and decreases monocyte adherence to surfaces coated with ICAM-1, a ligand for beta-2 integrins. SDF1A/CXCR4 signaling axis inhibits beta-2 integrin LFA-1 mediated adhesion of monocytes to ICAM-1 through LYN kinase. Inhibits CXCR4-mediated infection by T-cell line-adapted HIV-1. Plays a protective role after myocardial infarction. Induces down-regulation and internalization of ACKR3 expressed in various cells. Has several critical functions during embryonic development; required for B-cell lymphopoiesis, myelopoiesis in bone marrow and heart ventricular septum formation. Stimulates the proliferation of bone marrow-derived B-cell progenitors in the presence of IL7 as well as growth of stromal cell-dependent pre-B-cells. The sequence is that of Stromal cell-derived factor 1 (CXCL12) from Homo sapiens (Human).